Reading from the N-terminus, the 539-residue chain is Serine/threonine-protein kinase 35 (539 aa).

The tract at residues Ile-103–Val-161 is disordered. Residues Arg-148–Pro-160 show a composition bias toward basic residues. Residues Tyr-207 to Val-535 enclose the Protein kinase domain. ATP is bound by residues Ile-213–Val-221 and Lys-236. Residue Asp-365 is the Proton acceptor of the active site.

This sequence belongs to the protein kinase superfamily. Ser/Thr protein kinase family. In terms of assembly, interacts with PDLIM1/CLP-36. In terms of processing, autophosphorylated.

It localises to the nucleus. The protein localises to the nucleolus. It is found in the cytoplasm. It catalyses the reaction L-seryl-[protein] + ATP = O-phospho-L-seryl-[protein] + ADP + H(+). The enzyme catalyses L-threonyl-[protein] + ATP = O-phospho-L-threonyl-[protein] + ADP + H(+). The protein is Serine/threonine-protein kinase 35 (Stk35) of Mus musculus (Mouse).